The chain runs to 65 residues: Metallothionein-like protein type 3 (65 aa).

Belongs to the metallothionein superfamily. Type 15 family.

In terms of biological role, metallothioneins have a high content of cysteine residues that bind various heavy metals. The chain is Metallothionein-like protein type 3 from Musa acuminata (Banana).